Reading from the N-terminus, the 502-residue chain is Mannitol 2-dehydrogenase (502 aa).

Residue 37 to 48 (IVHVGVGGFHRA) participates in NAD(+) binding.

This sequence belongs to the mannitol dehydrogenase family. Monomer.

The catalysed reaction is D-mannitol + NAD(+) = D-fructose + NADH + H(+). Functionally, catalyzes the NAD(H)-dependent interconversion of D-fructose and D-mannitol in the mannitol metabolic pathway. In Aspergillus oryzae (strain ATCC 42149 / RIB 40) (Yellow koji mold), this protein is Mannitol 2-dehydrogenase.